Here is a 1343-residue protein sequence, read N- to C-terminus: Kinesin-like protein KIF7 (1343 aa).

Positions 15 to 349 (PVRVALRVRP…LNYASRAQNI (335 aa)) constitute a Kinesin motor domain. 94–101 (GQTGSGKT) is a binding site for ATP. Disordered regions lie at residues 356 to 382 (NWRP…RSET), 451 to 483 (RSAL…RKED), and 611 to 639 (EVNR…TLHL). The interval 358–479 (RPEAERPPEE…EDQAAQGAGG (122 aa)) is interaction with DLG5. The segment at 358-1206 (RPEAERPPEE…LGRYMWINQE (849 aa)) is interaction with SMO. Residues 480–542 (RKEDEGAQQL…ELRLRLELVR (63 aa)) are a coiled coil. The tract at residues 513–775 (AMEQYKLQSD…LRELEGKELQ (263 aa)) is sufficient for interaction with NPHP1. Coiled coils occupy residues 698 to 1057 (ASEW…AAIE) and 1109 to 1211 (TLRE…KQKL). Position 898 is a phosphoserine (Ser-898). 2 disordered regions span residues 1219-1238 (HSRG…APGN) and 1310-1343 (GEAG…KNPL).

Belongs to the TRAFAC class myosin-kinesin ATPase superfamily. Kinesin family. KIF27 subfamily. Can form homodimers and interacts with microtubules. Interacts with GLI1, GLI2, GLI3, SMO and SUFU. Interacts with NPHP1. Interacts with SMO and DLG5 (via PDZ4 or guanylate kinase-like domain). In terms of processing, polyubiquitinated by UBR3. As to expression, embryonic stem cells, melanotic melanoma and Jurkat T-cells. Expressed in heart, lung, liver, kidney, testis, retina, placenta, pancreas, colon, small intestin, prostate and thymus.

The protein localises to the cell projection. Its subcellular location is the cilium. The protein resides in the cytoplasm. It localises to the cytoskeleton. It is found in the cilium basal body. Essential for hedgehog signaling regulation: acts both as a negative and positive regulator of sonic hedgehog (Shh) and Indian hedgehog (Ihh) pathways, acting downstream of SMO, through both SUFU-dependent and -independent mechanisms. Involved in the regulation of microtubular dynamics. Required for proper organization of the ciliary tip and control of ciliary localization of SUFU-GLI2 complexes. Required for localization of GLI3 to cilia in response to Shh. Negatively regulates Shh signaling by preventing inappropriate activation of the transcriptional activator GLI2 in the absence of ligand. Positively regulates Shh signaling by preventing the processing of the transcription factor GLI3 into its repressor form. In keratinocytes, promotes the dissociation of SUFU-GLI2 complexes, GLI2 nuclear translocation and Shh signaling activation. Involved in the regulation of epidermal differentiation and chondrocyte development. The polypeptide is Kinesin-like protein KIF7 (KIF7) (Homo sapiens (Human)).